A 314-amino-acid polypeptide reads, in one-letter code: Peroxisome biogenesis factor 10 (314 aa).

Residues 1–7 (MNTYVAE) are Peroxisomal matrix-facing. Residues 8–37 (IGEIVRSQRRDEEYIEDITERLSRVSKELL) form a helical membrane-spanning segment. Position 38 (G38) is a topological domain, cytoplasmic. Residues 39–60 (QRTWIRWFPYLKSIASTLYYTS) form a helical membrane-spanning segment. Residues 61 to 90 (TVVLGNQTLGEEYVHLFESNGLERTVPSIP) lie on the Peroxisomal matrix side of the membrane. The helical transmembrane segment at 91–110 (SRISFVLLHSAFPLISNYLI) threads the bilayer. Over 111-142 (QKAESTLTHPSTESFLGIPIRKNQKARQSFLD) the chain is Cytoplasmic. A helical transmembrane segment spans residues 143–166 (VFFWLRTKLFPQLQRAHIALFYIT). The Peroxisomal matrix segment spans residues 167–197 (GAYYSIARRFTGIRFLSASAHSDIPALKVYR). A helical transmembrane segment spans residues 198–218 (FLGYITLIQLAVSIGISLYSF). The Cytoplasmic portion of the chain corresponds to 219–314 (LEQEKFNNKL…PRDVTPLLNL (96 aa)). The Zn(2+) site is built by C255, C258, C269, H271, C274, C277, C296, and C299. The RING-type zinc-finger motif lies at 255–300 (CSICLENKNPSALFCGHLFCWTCIQEHAVAATSSASTSSARCPQCR).

It belongs to the pex2/pex10/pex12 family. Component of the PEX2-PEX10-PEX12 retrotranslocation channel.

It is found in the peroxisome membrane. The enzyme catalyses S-ubiquitinyl-[E2 ubiquitin-conjugating enzyme]-L-cysteine + [acceptor protein]-L-lysine = [E2 ubiquitin-conjugating enzyme]-L-cysteine + N(6)-ubiquitinyl-[acceptor protein]-L-lysine.. Its pathway is protein modification; protein ubiquitination. Its activity is regulated as follows. The E3 ubiquitin-protein ligase activity is stimulated by PEX12/prx-12. In terms of biological role, E3 ubiquitin-protein ligase component of a retrotranslocation channel required for peroxisome organization by mediating export of the PEX5/prx-5 receptor from peroxisomes to the cytosol, thereby promoting PEX5/prx-5 recycling. The retrotranslocation channel is composed of PEX2/prx-2, PEX10/prx-10 and PEX12/prx-12; each subunit contributing transmembrane segments that coassemble into an open channel that specifically allows the passage of PEX5/prx-5 through the peroxisomal membrane. PEX10/prx-10 also regulates PEX5 recycling by acting as a E3 ubiquitin-protein ligase. When PEX5/prx-5 recycling is compromised, PEX10/prx-10 catalyzes polyubiquitination of PEX5/prx-5 during its passage through the retrotranslocation channel, leading to its degradation. The sequence is that of Peroxisome biogenesis factor 10 from Caenorhabditis elegans.